The following is a 471-amino-acid chain: Anthranilate 1,2-dioxygenase large subunit (471 aa).

Residues 52–160 (IYACHESEIP…IASYRGFVFV (109 aa)) enclose the Rieske domain. Residues cysteine 93, histidine 95, cysteine 113, and histidine 116 each coordinate [2Fe-2S] cluster. Residues histidine 220, histidine 225, and aspartate 379 each contribute to the Fe cation site.

Belongs to the bacterial ring-hydroxylating dioxygenase alpha subunit family. The anthranilate dioxygenase (AntDO) multicomponent enzyme system is composed of an oxygenase component and a NADH:acceptor reductase component (AntC). The oxygenase component is a heterohexamer of 3 large (AntA) and 3 small (AntB) subunits. The cofactor is Fe cation. Requires [2Fe-2S] cluster as cofactor.

The catalysed reaction is anthranilate + NADH + O2 + 3 H(+) = catechol + NH4(+) + CO2 + NAD(+). The enzyme catalyses anthranilate + NADPH + O2 + 3 H(+) = catechol + NH4(+) + CO2 + NADP(+). The protein operates within aromatic compound metabolism; anthranilate degradation via hydroxylation; catechol from anthranilate: step 1/1. Functionally, component of anthranilate dioxygenase multicomponent enzyme system which catalyzes the incorporation of both atoms of molecular oxygen into anthranilate to form catechol. The sequence is that of Anthranilate 1,2-dioxygenase large subunit from Acinetobacter baylyi (strain ATCC 33305 / BD413 / ADP1).